The following is a 307-amino-acid chain: Oxygen-dependent coproporphyrinogen-III oxidase (307 aa).

Ser99 is a binding site for substrate. A divalent metal cation-binding residues include His103 and His113. His113 serves as the catalytic Proton donor. A substrate-binding site is contributed by 115–117; it reads NVR. A divalent metal cation is bound by residues His152 and His182. Residues 247-282 are important for dimerization; that stretch reads YVEFNLVFDRGTLFGLQSGGRTESILMSMPPVANWR. Position 265–267 (265–267) interacts with substrate; it reads GGR.

The protein belongs to the aerobic coproporphyrinogen-III oxidase family. Homodimer. A divalent metal cation is required as a cofactor.

It localises to the cytoplasm. It catalyses the reaction coproporphyrinogen III + O2 + 2 H(+) = protoporphyrinogen IX + 2 CO2 + 2 H2O. Its pathway is porphyrin-containing compound metabolism; protoporphyrin-IX biosynthesis; protoporphyrinogen-IX from coproporphyrinogen-III (O2 route): step 1/1. In terms of biological role, involved in the heme biosynthesis. Catalyzes the aerobic oxidative decarboxylation of propionate groups of rings A and B of coproporphyrinogen-III to yield the vinyl groups in protoporphyrinogen-IX. The sequence is that of Oxygen-dependent coproporphyrinogen-III oxidase from Burkholderia orbicola (strain MC0-3).